The primary structure comprises 585 residues: Probable phosphoglucomutase, cytoplasmic 2 (585 aa).

Residues 1-20 are disordered; sequence MVSFKVSLVSTSPIDGQKPG. 2 residues coordinate alpha-D-glucose 1,6-bisphosphate: Arg-25 and Ser-124. Ser-124 (phosphoserine intermediate) is an active-site residue. Residues Ser-124, Asp-301, Asp-303, and Asp-305 each contribute to the Mg(2+) site. Phosphoserine is present on Ser-124. Residues Asp-305, Arg-306, Thr-369, Glu-388, Ser-390, and Lys-401 each coordinate alpha-D-glucose 1,6-bisphosphate.

It belongs to the phosphohexose mutase family. Monomer. It depends on Mg(2+) as a cofactor.

Its subcellular location is the cytoplasm. The catalysed reaction is alpha-D-glucose 1-phosphate = alpha-D-glucose 6-phosphate. It catalyses the reaction O-phospho-L-seryl-[protein] + alpha-D-glucose 1-phosphate = alpha-D-glucose 1,6-bisphosphate + L-seryl-[protein]. It carries out the reaction alpha-D-glucose 1,6-bisphosphate + L-seryl-[protein] = O-phospho-L-seryl-[protein] + alpha-D-glucose 6-phosphate. Its function is as follows. Catalyzes the reversible isomerization of alpha-D-glucose 1-phosphate to alpha-D-glucose 6-phosphate. The mechanism proceeds via the intermediate compound alpha-D-glucose 1,6-bisphosphate. This enzyme participates in both the breakdown and synthesis of glucose. The polypeptide is Probable phosphoglucomutase, cytoplasmic 2 (Arabidopsis thaliana (Mouse-ear cress)).